The chain runs to 717 residues: Ribosomal RNA large subunit methyltransferase K/L (717 aa).

One can recognise a THUMP domain in the interval 43 to 154; the sequence is IGYKACLWSR…KGKANITLDL (112 aa).

This sequence belongs to the methyltransferase superfamily. RlmKL family.

The protein localises to the cytoplasm. The catalysed reaction is guanosine(2445) in 23S rRNA + S-adenosyl-L-methionine = N(2)-methylguanosine(2445) in 23S rRNA + S-adenosyl-L-homocysteine + H(+). The enzyme catalyses guanosine(2069) in 23S rRNA + S-adenosyl-L-methionine = N(2)-methylguanosine(2069) in 23S rRNA + S-adenosyl-L-homocysteine + H(+). Functionally, specifically methylates the guanine in position 2445 (m2G2445) and the guanine in position 2069 (m7G2069) of 23S rRNA. The sequence is that of Ribosomal RNA large subunit methyltransferase K/L from Aeromonas hydrophila subsp. hydrophila (strain ATCC 7966 / DSM 30187 / BCRC 13018 / CCUG 14551 / JCM 1027 / KCTC 2358 / NCIMB 9240 / NCTC 8049).